The following is a 199-amino-acid chain: NAD(P)H dehydrogenase (quinone) (199 aa).

One can recognise a Flavodoxin-like domain in the interval 4-190 (ILVLYYSMYG…TIARYQGEHV (187 aa)). Residues 10–15 (SMYGHI) and 79–81 (TRF) each bind FMN. Tyr12 provides a ligand contact to NAD(+). Substrate is bound at residue Trp99. FMN-binding positions include 114–119 (STGTGG) and His134.

It belongs to the WrbA family. It depends on FMN as a cofactor.

The catalysed reaction is a quinone + NADH + H(+) = a quinol + NAD(+). It carries out the reaction a quinone + NADPH + H(+) = a quinol + NADP(+). The sequence is that of NAD(P)H dehydrogenase (quinone) from Serratia proteamaculans (strain 568).